The chain runs to 340 residues: GTP 3',8-cyclase (340 aa).

The 220-residue stretch at 8–227 (KLGRPIRDLR…SMIQEEFDIE (220 aa)) folds into the Radical SAM core domain. A GTP-binding site is contributed by R17. [4Fe-4S] cluster is bound by residues C24 and C28. Y30 serves as a coordination point for S-adenosyl-L-methionine. [4Fe-4S] cluster is bound at residue C31. R71 lines the GTP pocket. S-adenosyl-L-methionine is bound at residue G75. Residue T102 participates in GTP binding. An S-adenosyl-L-methionine-binding site is contributed by S126. K163 is a binding site for GTP. M197 contacts S-adenosyl-L-methionine. The [4Fe-4S] cluster site is built by C261 and C264. 266-268 (RAR) contacts GTP. A [4Fe-4S] cluster-binding site is contributed by C278.

It belongs to the radical SAM superfamily. MoaA family. As to quaternary structure, monomer and homodimer. The cofactor is [4Fe-4S] cluster.

It carries out the reaction GTP + AH2 + S-adenosyl-L-methionine = (8S)-3',8-cyclo-7,8-dihydroguanosine 5'-triphosphate + 5'-deoxyadenosine + L-methionine + A + H(+). Its pathway is cofactor biosynthesis; molybdopterin biosynthesis. In terms of biological role, catalyzes the cyclization of GTP to (8S)-3',8-cyclo-7,8-dihydroguanosine 5'-triphosphate. This Staphylococcus carnosus (strain TM300) protein is GTP 3',8-cyclase.